The chain runs to 88 residues: Large ribosomal subunit protein bL27 (88 aa).

The disordered stretch occupies residues Met-1 to Val-23.

It belongs to the bacterial ribosomal protein bL27 family.

In Methylorubrum extorquens (strain CM4 / NCIMB 13688) (Methylobacterium extorquens), this protein is Large ribosomal subunit protein bL27.